The primary structure comprises 219 residues: Endonuclease III (219 aa).

Positions 117 to 136 (MEELLTLPGVARKTANVVLA) constitute a HhH domain. 4 residues coordinate [4Fe-4S] cluster: C197, C204, C207, and C213.

It belongs to the Nth/MutY family. [4Fe-4S] cluster is required as a cofactor.

It catalyses the reaction 2'-deoxyribonucleotide-(2'-deoxyribose 5'-phosphate)-2'-deoxyribonucleotide-DNA = a 3'-end 2'-deoxyribonucleotide-(2,3-dehydro-2,3-deoxyribose 5'-phosphate)-DNA + a 5'-end 5'-phospho-2'-deoxyribonucleoside-DNA + H(+). Its function is as follows. DNA repair enzyme that has both DNA N-glycosylase activity and AP-lyase activity. The DNA N-glycosylase activity releases various damaged pyrimidines from DNA by cleaving the N-glycosidic bond, leaving an AP (apurinic/apyrimidinic) site. The AP-lyase activity cleaves the phosphodiester bond 3' to the AP site by a beta-elimination, leaving a 3'-terminal unsaturated sugar and a product with a terminal 5'-phosphate. The chain is Endonuclease III from Synechocystis sp. (strain ATCC 27184 / PCC 6803 / Kazusa).